Reading from the N-terminus, the 304-residue chain is MKIKIAARGSKLSLKQVSMFTSYLLKFFPDLEYEVITVKTTGDKANAPFEELAKRGLTGLFEKEVNKAVLEGKADVAVHSLKDLPTELDPRLEIAAFLPRDPPYDVLISRAGNYDIFDLPKGSVVGTSSARRKALIKNLRPDLVVKDLRGNVDTRLEKLRRGEYDAIVLAEAGVSRLGLNVDYVRLDWRLFPPSPGQGIIVAVTRKGSEISDLLKSISDVKSEKLATAERTVLKEFGGGCFVALGAIAFEEGSLIRLRATVLSPSGRERVDVELIGKGPEEVGMRAAERLKALNPMKTTVGSEE.

S-(dipyrrolylmethanemethyl)cysteine is present on Cys240.

Belongs to the HMBS family. The cofactor is dipyrromethane.

It carries out the reaction 4 porphobilinogen + H2O = hydroxymethylbilane + 4 NH4(+). It functions in the pathway porphyrin-containing compound metabolism; protoporphyrin-IX biosynthesis; coproporphyrinogen-III from 5-aminolevulinate: step 2/4. In terms of biological role, tetrapolymerization of the monopyrrole PBG into the hydroxymethylbilane pre-uroporphyrinogen in several discrete steps. This chain is Probable porphobilinogen deaminase, found in Ignicoccus hospitalis (strain KIN4/I / DSM 18386 / JCM 14125).